Reading from the N-terminus, the 146-residue chain is Holo-[acyl-carrier-protein] synthase (146 aa).

D8 and E61 together coordinate Mg(2+).

The protein belongs to the P-Pant transferase superfamily. AcpS family. Mg(2+) is required as a cofactor.

It localises to the cytoplasm. It catalyses the reaction apo-[ACP] + CoA = holo-[ACP] + adenosine 3',5'-bisphosphate + H(+). Its function is as follows. Transfers the 4'-phosphopantetheine moiety from coenzyme A to a Ser of acyl-carrier-protein. The polypeptide is Holo-[acyl-carrier-protein] synthase (Rhodopseudomonas palustris (strain TIE-1)).